The primary structure comprises 987 residues: Ephrin type-B receptor 4a (987 aa).

Positions 1-24 (MELFSRNVAAFWIILLEFLLGSVA) are cleaved as a signal peptide. The Extracellular portion of the chain corresponds to 25-548 (EEEVLMNTKT…DSSSPLLVTG (524 aa)). Residues 26–205 (EEVLMNTKTE…FFKKCPALTR (180 aa)) form the Eph LBD domain. 2 disulfides stabilise this stretch: Cys-70–Cys-187 and Cys-104–Cys-114. The tract at residues 319 to 340 (DSADTPCTRPPSSPRSPVPQVN) is disordered. Over residues 326–335 (TRPPSSPRSP) the composition is skewed to pro residues. Fibronectin type-III domains are found at residues 328–438 (PPSS…TSPN) and 442–536 (LVSG…TLPD). The chain crosses the membrane as a helical span at residues 549-569 (ILIAMGMLLLIIVIGAAIYCI). The Cytoplasmic segment spans residues 570–987 (RKQNNYKDPE…QNKAPGNVLY (418 aa)). The Protein kinase domain occupies 621-884 (VKIEEVIGAG…NIVSALDKLI (264 aa)). Residues 627-635 (IGAGEFGEV) and Lys-653 contribute to the ATP site. Asp-746 (proton acceptor) is an active-site residue. The region spanning 914–978 (SSCGTVGDWL…LSSIEALGIQ (65 aa)) is the SAM domain.

It belongs to the protein kinase superfamily. Tyr protein kinase family. Ephrin receptor subfamily.

The protein localises to the cell membrane. The catalysed reaction is L-tyrosyl-[protein] + ATP = O-phospho-L-tyrosyl-[protein] + ADP + H(+). Receptor tyrosine kinase which binds promiscuously transmembrane ephrin-B family ligands residing on adjacent cells, leading to contact-dependent bidirectional signaling into neighboring cells. The signaling pathway downstream of the receptor is referred to as forward signaling while the signaling pathway downstream of the ephrin ligand is referred to as reverse signaling. Together with its cognate ligand/functional ligand EFNB2 is involved in the regulation of cell adhesion and cell migration, and plays a central role in heart morphogenesis, angiogenesis and blood vessel remodeling and permeability. EPHB4-mediated forward signaling controls cellular repulsion and segregation from EFNB2-expressing cells. Involved in somitogenesis. The protein is Ephrin type-B receptor 4a of Danio rerio (Zebrafish).